Reading from the N-terminus, the 24-residue chain is Ranatuerin-4 (24 aa).

Residues Cys-18 and Cys-24 are joined by a disulfide bond.

This sequence belongs to the frog skin active peptide (FSAP) family. Ranatuerin subfamily. In terms of tissue distribution, expressed by the skin glands.

The protein resides in the secreted. In terms of biological role, antibacterial activity against Gram-positive bacterium S.aureus (MIC=55 uM). Shows no detectable hemolytic activity towards human erythrocytes. The chain is Ranatuerin-4 from Aquarana catesbeiana (American bullfrog).